A 290-amino-acid chain; its full sequence is MTARILDGNALSARVRGELAERAAALADGGVQPCLAVILVGVNPASAVYVRNKVAACEKAGIRSLRFDFAADVDAAEVMAKIAELNADSAVHGVLVQLPLPKQFNEAEVLEAIRVEKDVDGFHAENVGRLSQGQEAFLPCTPHGVMKMLEAGGVPVQGAEAVVIGRSNIVGKPMAMLLTNAGATVTVTHSKTRDLAFHTRRADILVAAIGKPRFVTGDMIKPGAVVIDVGINRLTEGPDAGKLCGDVDFESAKEVASLITPVPGGVGPMTITMLLANTVESAERVARSKG.

Residues 165-167 (GRS), serine 190, and isoleucine 231 each bind NADP(+).

Belongs to the tetrahydrofolate dehydrogenase/cyclohydrolase family. Homodimer.

The enzyme catalyses (6R)-5,10-methylene-5,6,7,8-tetrahydrofolate + NADP(+) = (6R)-5,10-methenyltetrahydrofolate + NADPH. It catalyses the reaction (6R)-5,10-methenyltetrahydrofolate + H2O = (6R)-10-formyltetrahydrofolate + H(+). Its pathway is one-carbon metabolism; tetrahydrofolate interconversion. In terms of biological role, catalyzes the oxidation of 5,10-methylenetetrahydrofolate to 5,10-methenyltetrahydrofolate and then the hydrolysis of 5,10-methenyltetrahydrofolate to 10-formyltetrahydrofolate. The polypeptide is Bifunctional protein FolD (Aromatoleum aromaticum (strain DSM 19018 / LMG 30748 / EbN1) (Azoarcus sp. (strain EbN1))).